The chain runs to 221 residues: Histone H1C (221 aa).

2 stretches are compositionally biased toward low complexity: residues 1–11 and 27–44; these read MTETAATETTP and KKAA…PSAS. Disordered regions lie at residues 1-44 and 123-221; these read MTET…PSAS and AKKK…AAKK. The region spanning 39–112 is the H15 domain; that stretch reads SGPSASELIV…GASGSFKLNK (74 aa). 2 stretches are compositionally biased toward basic residues: residues 123–150 and 158–221; these read AKKK…KPKK and SPKK…AAKK.

The protein belongs to the histone H1/H5 family.

It is found in the nucleus. The protein localises to the chromosome. Its function is as follows. Histones H1 are necessary for the condensation of nucleosome chains into higher-order structures. This chain is Histone H1C, found in Xenopus laevis (African clawed frog).